We begin with the raw amino-acid sequence, 178 residues long: NADH-quinone oxidoreductase subunit I 2 (178 aa).

4Fe-4S ferredoxin-type domains are found at residues 46–78 (IVLTRDPDGGERCVACYLCSAVCPVSCISMQAA) and 88–117 (AWFRINFARCIYCGLCEEACPTSAIQLTPF). Residues C58, C61, C64, C68, C97, C100, C103, and C107 each coordinate [4Fe-4S] cluster.

It belongs to the complex I 23 kDa subunit family. NDH-1 is composed of 14 different subunits. Subunits NuoA, H, J, K, L, M, N constitute the membrane sector of the complex. [4Fe-4S] cluster is required as a cofactor.

The protein localises to the cell inner membrane. It catalyses the reaction a quinone + NADH + 5 H(+)(in) = a quinol + NAD(+) + 4 H(+)(out). NDH-1 shuttles electrons from NADH, via FMN and iron-sulfur (Fe-S) centers, to quinones in the respiratory chain. The immediate electron acceptor for the enzyme in this species is believed to be ubiquinone. Couples the redox reaction to proton translocation (for every two electrons transferred, four hydrogen ions are translocated across the cytoplasmic membrane), and thus conserves the redox energy in a proton gradient. The polypeptide is NADH-quinone oxidoreductase subunit I 2 (Syntrophobacter fumaroxidans (strain DSM 10017 / MPOB)).